Reading from the N-terminus, the 243-residue chain is uncharacterized protein (243 aa).

Positions 1-19 (MKSLPLLGILAFAANRLSA) are cleaved as a signal peptide. N-linked (GlcNAc...) asparagine glycosylation is found at Asn-112 and Asn-206.

This is an uncharacterized protein from Encephalitozoon cuniculi (strain GB-M1) (Microsporidian parasite).